Reading from the N-terminus, the 451-residue chain is Porin AaxA (451 aa).

Residues 1–27 (MASFHSSLLTALCTLCTYGILTMPAYG) form the signal peptide.

Belongs to the OprB family.

The protein resides in the cell outer membrane. In terms of biological role, facilitates L-arginine uptake, as part of the AaxABC system. The arginine uptake by the bacterium in the macrophage may be a virulence factor against the host innate immune response. The sequence is that of Porin AaxA (aaxA) from Chlamydia caviae (strain ATCC VR-813 / DSM 19441 / 03DC25 / GPIC) (Chlamydophila caviae).